The sequence spans 138 residues: Putative pre-16S rRNA nuclease (138 aa).

The protein belongs to the YqgF nuclease family.

The protein resides in the cytoplasm. Its function is as follows. Could be a nuclease involved in processing of the 5'-end of pre-16S rRNA. The sequence is that of Putative pre-16S rRNA nuclease (yrrK) from Bacillus subtilis (strain 168).